A 301-amino-acid chain; its full sequence is Probable aspartoacylase (301 aa).

Zn(2+) contacts are provided by His13 and Glu16. Substrate is bound by residues Arg54 and 61–62 (NR). His105 contacts Zn(2+). Substrate contacts are provided by Glu163 and Tyr273.

Belongs to the AspA/AstE family. Aspartoacylase subfamily. Zn(2+) is required as a cofactor.

The enzyme catalyses an N-acyl-L-aspartate + H2O = a carboxylate + L-aspartate. The sequence is that of Probable aspartoacylase from Prochlorococcus marinus (strain AS9601).